The primary structure comprises 320 residues: Malate dehydrogenase (320 aa).

NAD(+)-binding positions include 10–15 (GSGMIG) and D34. Substrate-binding residues include R83 and R89. NAD(+) is bound by residues N96 and 119–121 (ITN). 2 residues coordinate substrate: N121 and R152. H176 functions as the Proton acceptor in the catalytic mechanism.

It belongs to the LDH/MDH superfamily. MDH type 3 family.

It carries out the reaction (S)-malate + NAD(+) = oxaloacetate + NADH + H(+). Catalyzes the reversible oxidation of malate to oxaloacetate. The sequence is that of Malate dehydrogenase from Rhizobium johnstonii (strain DSM 114642 / LMG 32736 / 3841) (Rhizobium leguminosarum bv. viciae).